Consider the following 113-residue polypeptide: Urotensin-2B (113 aa).

The first 27 residues, Met1 to Gly27, serve as a signal peptide directing secretion. Residues Arg28–Lys103 constitute a propeptide that is removed on maturation. A disulfide bridge connects residues Cys107 and Cys112.

It belongs to the urotensin-2 family.

It is found in the secreted. Potent vasoconstrictor. This Mus musculus (Mouse) protein is Urotensin-2B (Uts2b).